A 315-amino-acid polypeptide reads, in one-letter code: Long form salivary protein D7L1 (315 aa).

An N-terminal signal peptide occupies residues 1 to 18 (MIIVAVLLSFLAHLLVQA). Intrachain disulfides connect Cys37/Cys73 and Cys69/Cys128. Trp55 contributes to the thromboxane A2 binding site. Trp58 lines the leukotriene C4 pocket. Tyr70 is a thromboxane A2 binding site. Positions 152 and 170 each coordinate leukotriene C4. Lys170 serves as a coordination point for thromboxane A2. Cystine bridges form between Cys178–Cys211 and Cys252–Cys263.

This sequence belongs to the PBP/GOBP family. In terms of tissue distribution, distal-lateral and median lobes of female salivary gland (at protein level). Not detected in male salivary gland (at protein level). Expressed in female salivary gland. Not detected in female carcass without salivary glands. Expressed in male salivary gland and other tissues.

It is found in the secreted. In terms of biological role, modulates blood feeding of female mosquitoes on vertebrate species by binding and sequestering different mediators involved in the host response. Binds leukotriene C4, leukotriene D4, leukotriene E4 and stable analogs of thromboxane A2, U-46619 and carbocyclic TXA2. Binds weakly prostaglandins: PGD2, PGE2 and PGF2alpha. Does not bind leukotriene B4, biogenic amines, ADP, platelet activating phospholipid derivative PAF and arachidonic acid. Inhibits agonist-induced smooth muscle contraction. Inhibits platelet aggregation induced by low concentrations of collagen in thromboxane A2-dependent manner. This Anopheles stephensi (Indo-Pakistan malaria mosquito) protein is Long form salivary protein D7L1.